The chain runs to 323 residues: tRNA dimethylallyltransferase (323 aa).

ATP is bound at residue glycine 12–threonine 19. Threonine 14–threonine 19 is a substrate binding site. 2 interaction with substrate tRNA regions span residues aspartate 37–leucine 40 and glutamine 161–arginine 165.

This sequence belongs to the IPP transferase family. In terms of assembly, monomer. It depends on Mg(2+) as a cofactor.

It catalyses the reaction adenosine(37) in tRNA + dimethylallyl diphosphate = N(6)-dimethylallyladenosine(37) in tRNA + diphosphate. Its function is as follows. Catalyzes the transfer of a dimethylallyl group onto the adenine at position 37 in tRNAs that read codons beginning with uridine, leading to the formation of N6-(dimethylallyl)adenosine (i(6)A). The sequence is that of tRNA dimethylallyltransferase from Pseudomonas putida (strain GB-1).